The primary structure comprises 128 residues: Iron-sulfur cluster insertion protein ErpA (128 aa).

3 residues coordinate iron-sulfur cluster: Cys-56, Cys-120, and Cys-122.

It belongs to the HesB/IscA family. As to quaternary structure, homodimer. Iron-sulfur cluster is required as a cofactor.

Required for insertion of 4Fe-4S clusters for at least IspG. This is Iron-sulfur cluster insertion protein ErpA from Xylella fastidiosa (strain M12).